The sequence spans 351 residues: Phosphoribosylformylglycinamidine cyclo-ligase (351 aa).

Belongs to the AIR synthase family.

The protein resides in the cytoplasm. It carries out the reaction 2-formamido-N(1)-(5-O-phospho-beta-D-ribosyl)acetamidine + ATP = 5-amino-1-(5-phospho-beta-D-ribosyl)imidazole + ADP + phosphate + H(+). It functions in the pathway purine metabolism; IMP biosynthesis via de novo pathway; 5-amino-1-(5-phospho-D-ribosyl)imidazole from N(2)-formyl-N(1)-(5-phospho-D-ribosyl)glycinamide: step 2/2. This is Phosphoribosylformylglycinamidine cyclo-ligase from Burkholderia multivorans (strain ATCC 17616 / 249).